The chain runs to 497 residues: Acetyl-coenzyme A carboxylase carboxyl transferase subunit beta, chloroplastic (497 aa).

The tract at residues 30–50 (GPVENTTVNEDPTRNDTDKNI) is disordered. A compositionally biased stretch (basic and acidic residues) spans 40 to 50 (DPTRNDTDKNI). Positions 230-497 (VQCECENCYG…FFPLNQNSIK (268 aa)) constitute a CoA carboxyltransferase N-terminal domain. Zn(2+) contacts are provided by C232, C237, C253, and C256. A C4-type zinc finger spans residues 232–256 (CECENCYGVNYKKSLNSKMNICEQC).

Belongs to the AccD/PCCB family. As to quaternary structure, acetyl-CoA carboxylase is a heterohexamer composed of biotin carboxyl carrier protein, biotin carboxylase and 2 subunits each of ACCase subunit alpha and ACCase plastid-coded subunit beta (accD). It depends on Zn(2+) as a cofactor.

The protein localises to the plastid. It localises to the chloroplast stroma. The enzyme catalyses N(6)-carboxybiotinyl-L-lysyl-[protein] + acetyl-CoA = N(6)-biotinyl-L-lysyl-[protein] + malonyl-CoA. Its pathway is lipid metabolism; malonyl-CoA biosynthesis; malonyl-CoA from acetyl-CoA: step 1/1. Component of the acetyl coenzyme A carboxylase (ACC) complex. Biotin carboxylase (BC) catalyzes the carboxylation of biotin on its carrier protein (BCCP) and then the CO(2) group is transferred by the transcarboxylase to acetyl-CoA to form malonyl-CoA. This is Acetyl-coenzyme A carboxylase carboxyl transferase subunit beta, chloroplastic from Gossypium hirsutum (Upland cotton).